We begin with the raw amino-acid sequence, 184 residues long: Guanylate kinase (184 aa).

The 179-residue stretch at 5–183 folds into the Guanylate kinase-like domain; sequence KKLIILTGPS…TAKRIIKLIQ (179 aa). 12 to 19 contributes to the ATP binding site; that stretch reads GPSGVGKG.

It belongs to the guanylate kinase family.

The protein localises to the cytoplasm. The enzyme catalyses GMP + ATP = GDP + ADP. In terms of biological role, essential for recycling GMP and indirectly, cGMP. The protein is Guanylate kinase of Prochlorococcus marinus (strain MIT 9312).